A 158-amino-acid polypeptide reads, in one-letter code: NAD(P)H-quinone oxidoreductase subunit J, chloroplastic (158 aa).

The protein belongs to the complex I 30 kDa subunit family. In terms of assembly, NDH is composed of at least 16 different subunits, 5 of which are encoded in the nucleus.

Its subcellular location is the plastid. It localises to the chloroplast thylakoid membrane. The catalysed reaction is a plastoquinone + NADH + (n+1) H(+)(in) = a plastoquinol + NAD(+) + n H(+)(out). It carries out the reaction a plastoquinone + NADPH + (n+1) H(+)(in) = a plastoquinol + NADP(+) + n H(+)(out). In terms of biological role, NDH shuttles electrons from NAD(P)H:plastoquinone, via FMN and iron-sulfur (Fe-S) centers, to quinones in the photosynthetic chain and possibly in a chloroplast respiratory chain. The immediate electron acceptor for the enzyme in this species is believed to be plastoquinone. Couples the redox reaction to proton translocation, and thus conserves the redox energy in a proton gradient. This chain is NAD(P)H-quinone oxidoreductase subunit J, chloroplastic, found in Nasturtium officinale (Watercress).